Consider the following 163-residue polypeptide: MQNLKIQEEVNSLMRLGQHFDDQLKLASVELGDFSDDDLALLDKCAQYYSLLHIHDINLNYLRDFYCAKKRECIENRQTTVQQRVELQRILSSIEEATRDVVMLERFNAAAEERLIPDIVVMQRNAQQLATKQALLDRQKTLKIPKDFSIESVIEKVDSLEQR.

The stretch at 86–115 (ELQRILSSIEEATRDVVMLERFNAAAEERL) forms a coiled coil.

As to quaternary structure, component of the augmin complex composed of dgt2, dgt3, dgt4, dgt5, dgt6, msd1, msd5 and wac. The complex interacts directly or indirectly with microtubules and is required for centrosome-independent generation of spindle microtubules. wac interacts directly (via coiled coil) with dgt2. In adult females, detected only in the abdomen with no expression in the head or thorax (at protein level).

The protein resides in the cytoplasm. Its subcellular location is the cytoskeleton. It localises to the spindle. The protein localises to the spindle pole. As part of the augmin complex, plays a role in centrosome-independent generation of spindle microtubules. The complex is required for mitotic spindle assembly through its involvement in localizing gamma-tubulin to spindle microtubules. wac is dispensable for somatic mitosis and for assembly of spindle microtubules in oocytes during female meiosis but is required during female meiosis for chromosome alignment and segregation. It is required for microtubule assembly near spindle poles in oocytes. It is also required for acentrosomal microtubule nucleation and meiotic spindle formation during male meiosis. wac binds to microtubules in vitro. This is Augmin complex subunit wac from Drosophila melanogaster (Fruit fly).